Reading from the N-terminus, the 655-residue chain is Proprotein convertase subtilisin/kexin type 4 (655 aa).

The signal sequence occupies residues 1-26 (MRPSQTELWLGLTLTLALLAVRWASA). Residues 27-110 (QAPIYVSSWA…QQTLRRRVKR (84 aa)) constitute a propeptide that is removed on maturation. One can recognise a Peptidase S8 domain in the interval 123–437 (QWYMNKEIQQ…YGLLDAGLLV (315 aa)). Residues Asp155, His196, and Ser370 each act as charge relay system in the active site. The P/Homo B domain occupies 446 to 580 (TKPQKKCAIR…TLLLYGTAED (135 aa)). An N-linked (GlcNAc...) asparagine glycan is attached at Asn472.

It belongs to the peptidase S8 family. Furin subfamily. As to quaternary structure, the proPCSK4 form interacts with HSPA5; the interaction takes place at the endoplasmic reticulum. Post-translationally, N-glycosylated. In terms of processing, synthesized in the endoplasmic reticulum as a zymogen, is matured by autocatalytic cleavage between the prodomain and the catalytic domain. As to expression, expressed abundantly in the testis since postnatal Day 16. In testis, strongly detected in round and elongated spermatids as well as spermatocytes. Also observed in residual bodies engulfed by Sertoli cells at spermatogenic stages VIII and IX. In ovaries, expressed in macrophage-like cells of the ovarian theca, interstitium and corpora lutea.

It localises to the cytoplasmic vesicle. The protein localises to the secretory vesicle. It is found in the acrosome membrane. Proprotein convertase involved in the processing of hormone and other protein precursors at sites comprised of pairs of basic amino acid residues. In males, important for ADAM2 processing as well as other acrosomal proteins with roles in fertilization and critical for normal fertilization events such as sperm capacitation, acrosome reaction and binding of sperm to zona pellucida. Also plays a role in female fertility, involved in the regulation of trophoblast migration and placental development, may be through the proteolytical processing and activation of proteins such as IGF2. May also participate in folliculogenesis in the ovaries. This chain is Proprotein convertase subtilisin/kexin type 4 (Pcsk4), found in Mus musculus (Mouse).